The sequence spans 388 residues: Succinate--CoA ligase [ADP-forming] subunit beta (388 aa).

Residues K9–K245 form the ATP-grasp domain. Residues K46, G53–G55, E100, Y103, and E108 contribute to the ATP site. Mg(2+)-binding residues include N200 and D214. Residues N265 and G322–V324 contribute to the substrate site.

It belongs to the succinate/malate CoA ligase beta subunit family. Heterotetramer of two alpha and two beta subunits. Requires Mg(2+) as cofactor.

It catalyses the reaction succinate + ATP + CoA = succinyl-CoA + ADP + phosphate. The enzyme catalyses GTP + succinate + CoA = succinyl-CoA + GDP + phosphate. It functions in the pathway carbohydrate metabolism; tricarboxylic acid cycle; succinate from succinyl-CoA (ligase route): step 1/1. Functionally, succinyl-CoA synthetase functions in the citric acid cycle (TCA), coupling the hydrolysis of succinyl-CoA to the synthesis of either ATP or GTP and thus represents the only step of substrate-level phosphorylation in the TCA. The beta subunit provides nucleotide specificity of the enzyme and binds the substrate succinate, while the binding sites for coenzyme A and phosphate are found in the alpha subunit. The protein is Succinate--CoA ligase [ADP-forming] subunit beta of Acinetobacter baumannii (strain SDF).